Here is a 595-residue protein sequence, read N- to C-terminus: Chaperone protein HscA homolog (595 aa).

Belongs to the heat shock protein 70 family.

Chaperone involved in the maturation of iron-sulfur cluster-containing proteins. Has a low intrinsic ATPase activity which is markedly stimulated by HscB. This chain is Chaperone protein HscA homolog, found in Rickettsia conorii (strain ATCC VR-613 / Malish 7).